A 396-amino-acid polypeptide reads, in one-letter code: L-lactate dehydrogenase (396 aa).

In terms of domain architecture, FMN hydroxy acid dehydrogenase spans 1-380; that stretch reads MIISAASDYR…TQDSLVQGLG (380 aa). Tyr-24 provides a ligand contact to substrate. FMN is bound by residues Ser-106 and Gln-127. Residue Tyr-129 coordinates substrate. Thr-155 serves as a coordination point for FMN. Position 164 (Arg-164) interacts with substrate. Residue Lys-251 coordinates FMN. His-275 acts as the Proton acceptor in catalysis. Arg-278 serves as a coordination point for substrate. Residue 306-330 participates in FMN binding; it reads DSGIRNGLDVVRMIALGADTVLLGR.

The protein belongs to the FMN-dependent alpha-hydroxy acid dehydrogenase family. FMN serves as cofactor.

Its subcellular location is the cell inner membrane. It catalyses the reaction (S)-lactate + A = pyruvate + AH2. In terms of biological role, catalyzes the conversion of L-lactate to pyruvate. Is coupled to the respiratory chain. This chain is L-lactate dehydrogenase, found in Shigella flexneri serotype 5b (strain 8401).